The sequence spans 112 residues: Omega-agatoxin-1A (112 aa).

Positions 1–19 (MMKFVVFLACLFVAAHSFA) are cleaved as a signal peptide. Positions 20 to 36 (VEGEEEYFEAEVPELER) are excised as a propeptide. Residues 103-109 (RSEESER) constitute a propeptide, glu-rich.

It belongs to the neurotoxin 04 (omega-agtx) family. 01 (type I omega-agtx) subfamily. Heterodimer of two subunits, a major chain and a minor chain, linked by a disulfide bond. Proteolytically processed to yield the major and the minor chains. As to expression, expressed by the venom gland.

Its subcellular location is the secreted. Functionally, omega-agatoxins are antagonists of voltage-gated calcium channels. They block insect neuromuscular transmission presynaptically. This toxin is a blocker of L-type calcium channels (Cav/CACNA1). This is Omega-agatoxin-1A from Agelenopsis aperta (North American funnel-web spider).